Here is a 124-residue protein sequence, read N- to C-terminus: Large ribosomal subunit protein bL19 (124 aa).

This sequence belongs to the bacterial ribosomal protein bL19 family.

In terms of biological role, this protein is located at the 30S-50S ribosomal subunit interface and may play a role in the structure and function of the aminoacyl-tRNA binding site. The sequence is that of Large ribosomal subunit protein bL19 from Cereibacter sphaeroides (strain ATCC 17029 / ATH 2.4.9) (Rhodobacter sphaeroides).